The primary structure comprises 309 residues: Flavonol sulfotransferase-like (309 aa).

59–64 (KTGTTW) contacts 3'-phosphoadenylyl sulfate. His119 (proton acceptor) is an active-site residue. Residues Arg141, Ser149, Tyr207, and 274–276 (RKG) contribute to the 3'-phosphoadenylyl sulfate site.

Belongs to the sulfotransferase 1 family.

The protein localises to the cytoplasm. This Flaveria bidentis (Coastal plain yellowtops) protein is Flavonol sulfotransferase-like.